We begin with the raw amino-acid sequence, 157 residues long: Endoribonuclease YbeY (157 aa).

Positions 121, 125, and 131 each coordinate Zn(2+).

The protein belongs to the endoribonuclease YbeY family. Zn(2+) is required as a cofactor.

It localises to the cytoplasm. Single strand-specific metallo-endoribonuclease involved in late-stage 70S ribosome quality control and in maturation of the 3' terminus of the 16S rRNA. The protein is Endoribonuclease YbeY of Salinispora tropica (strain ATCC BAA-916 / DSM 44818 / JCM 13857 / NBRC 105044 / CNB-440).